A 295-amino-acid polypeptide reads, in one-letter code: Pyridoxal 5'-phosphate synthase subunit PdxS (295 aa).

D25 provides a ligand contact to D-ribose 5-phosphate. K82 serves as the catalytic Schiff-base intermediate with D-ribose 5-phosphate. D-ribose 5-phosphate is bound at residue G154. D-glyceraldehyde 3-phosphate is bound at residue R166. Residues G215 and 236-237 (GS) each bind D-ribose 5-phosphate.

The protein belongs to the PdxS/SNZ family. In terms of assembly, in the presence of PdxT, forms a dodecamer of heterodimers.

It catalyses the reaction aldehydo-D-ribose 5-phosphate + D-glyceraldehyde 3-phosphate + L-glutamine = pyridoxal 5'-phosphate + L-glutamate + phosphate + 3 H2O + H(+). It functions in the pathway cofactor biosynthesis; pyridoxal 5'-phosphate biosynthesis. Catalyzes the formation of pyridoxal 5'-phosphate from ribose 5-phosphate (RBP), glyceraldehyde 3-phosphate (G3P) and ammonia. The ammonia is provided by the PdxT subunit. Can also use ribulose 5-phosphate and dihydroxyacetone phosphate as substrates, resulting from enzyme-catalyzed isomerization of RBP and G3P, respectively. This Actinobacillus pleuropneumoniae serotype 5b (strain L20) protein is Pyridoxal 5'-phosphate synthase subunit PdxS.